The chain runs to 498 residues: ATP synthase subunit beta, chloroplastic (498 aa).

At T6 the chain carries Phosphothreonine. S13 bears the Phosphoserine mark. 172 to 179 (GGAGVGKT) provides a ligand contact to ATP.

Belongs to the ATPase alpha/beta chains family. As to quaternary structure, F-type ATPases have 2 components, CF(1) - the catalytic core - and CF(0) - the membrane proton channel. CF(1) has five subunits: alpha(3), beta(3), gamma(1), delta(1), epsilon(1). CF(0) has four main subunits: a(1), b(1), b'(1) and c(9-12).

Its subcellular location is the plastid. It localises to the chloroplast thylakoid membrane. It carries out the reaction ATP + H2O + 4 H(+)(in) = ADP + phosphate + 5 H(+)(out). In terms of biological role, produces ATP from ADP in the presence of a proton gradient across the membrane. The catalytic sites are hosted primarily by the beta subunits. This Raphanus sativus (Radish) protein is ATP synthase subunit beta, chloroplastic.